Here is a 388-residue protein sequence, read N- to C-terminus: Succinate--CoA ligase [ADP-forming] subunit beta (388 aa).

One can recognise an ATP-grasp domain in the interval 9-244 (KQLFARYGLP…HSQEDEREAH (236 aa)). Residues Lys46, 53-55 (GRG), Glu99, Thr102, and Glu107 each bind ATP. Asn199 and Asp213 together coordinate Mg(2+). Residues Asn264 and 321 to 323 (GIV) contribute to the substrate site.

It belongs to the succinate/malate CoA ligase beta subunit family. Heterotetramer of two alpha and two beta subunits. It depends on Mg(2+) as a cofactor.

It catalyses the reaction succinate + ATP + CoA = succinyl-CoA + ADP + phosphate. The catalysed reaction is GTP + succinate + CoA = succinyl-CoA + GDP + phosphate. It participates in carbohydrate metabolism; tricarboxylic acid cycle; succinate from succinyl-CoA (ligase route): step 1/1. Functionally, succinyl-CoA synthetase functions in the citric acid cycle (TCA), coupling the hydrolysis of succinyl-CoA to the synthesis of either ATP or GTP and thus represents the only step of substrate-level phosphorylation in the TCA. The beta subunit provides nucleotide specificity of the enzyme and binds the substrate succinate, while the binding sites for coenzyme A and phosphate are found in the alpha subunit. This Sodalis glossinidius (strain morsitans) protein is Succinate--CoA ligase [ADP-forming] subunit beta.